The primary structure comprises 555 residues: Solute carrier family 22 member 2 (555 aa).

At 1-21 (MPTTVDDVLEHGGEFHFFQKQ) the chain is on the cytoplasmic side. A helical membrane pass occupies residues 22–42 (MFFLLALLSATFTPIYVGIVF). The Extracellular segment spans residues 43-150 (LGFTPDHRCR…LVCANSWMLD (108 aa)). Residue N72 is glycosylated (N-linked (GlcNAc...) asparagine). A helical transmembrane segment spans residues 151–171 (LFQASVNVGFFFGSVSIGYIA). Residues 172-177 (DRFGRK) are Cytoplasmic-facing. The helical transmembrane segment at 178–198 (LCLLTTVLINAAAGVLMAISP) threads the bilayer. Topologically, residues 199–210 (TYTWMLIFRLIQ) are extracellular. Residues 211–231 (GLVSKAGWLIGYILITEFVGR) form a helical membrane-spanning segment. Residues 232-238 (RYRRTVG) lie on the Cytoplasmic side of the membrane. Residues 239 to 259 (IFYQVAYTVGLLVLAGVAYAL) traverse the membrane as a helical segment. Topologically, residues 260 to 263 (PHWR) are extracellular. Residues 264–284 (WLQFTVTLPNFFFLLYYWCIP) form a helical membrane-spanning segment. Positions 284 to 288 (PESPR) match the Proline-rich sequence motif. Residues 285–348 (ESPRWLISQN…VRTPQIRKHT (64 aa)) lie on the Cytoplasmic side of the membrane. A helical membrane pass occupies residues 349 to 369 (MILMYNWFTSSVLYQGLIMHM). The Extracellular segment spans residues 370–375 (GLAGDN). Residues 376–396 (IYLDFFYSALVEFPAAFMIIV) form a helical membrane-spanning segment. Topologically, residues 397-404 (TIDRIGRR) are cytoplasmic. Residues 405-425 (YPWAASNMVAGAACLASVFIP) traverse the membrane as a helical segment. Residues 426–432 (GDLQWLK) lie on the Extracellular side of the membrane. A helical transmembrane segment spans residues 433 to 453 (IIISCLGRMGITMAYEIVRLV). Over 454–464 (NAELYPTFIRN) the chain is Cytoplasmic. The helical transmembrane segment at 465-485 (LGVHICSSMCDIGGIITPFLV) threads the bilayer. At 486–494 (YRLTNIWLE) the chain is on the extracellular side. A helical membrane pass occupies residues 495 to 515 (LPLMVFGVLGLVAGGLVLLLP). Residues 516–555 (ETKGKALPETIEEAENMQRPRKNKEKMIYLQVQKLDIPLN) are Cytoplasmic-facing.

The protein belongs to the major facilitator (TC 2.A.1) superfamily. Organic cation transporter (TC 2.A.1.19) family. Tyrosine phosphorylated.

Its subcellular location is the basolateral cell membrane. The protein resides in the basal cell membrane. It is found in the apical cell membrane. The enzyme catalyses (R)-noradrenaline(out) = (R)-noradrenaline(in). It catalyses the reaction (R)-adrenaline(out) = (R)-adrenaline(in). The catalysed reaction is serotonin(out) = serotonin(in). It carries out the reaction dopamine(out) = dopamine(in). The enzyme catalyses histamine(out) = histamine(in). It catalyses the reaction thiamine(in) = thiamine(out). The catalysed reaction is creatinine(in) = creatinine(out). It carries out the reaction 1-methylnicotinamide(out) = 1-methylnicotinamide(in). The enzyme catalyses guanidine(out) = guanidine(in). It catalyses the reaction choline(out) = choline(in). The catalysed reaction is agmatine(out) = agmatine(in). It carries out the reaction putrescine(out) = putrescine(in). The enzyme catalyses spermidine(in) = spermidine(out). It catalyses the reaction tyramine(in) = tyramine(out). The catalysed reaction is L-histidyl-L-proline diketopiperazine(in) = L-histidyl-L-proline diketopiperazine(out). It carries out the reaction (R)-salsolinol(in) = (R)-salsolinol(out). The enzyme catalyses N-methyl-(R)-salsolinol(in) = N-methyl-(R)-salsolinol(out). It catalyses the reaction acetylcholine(in) = acetylcholine(out). The catalysed reaction is prostaglandin F2alpha(out) = prostaglandin F2alpha(in). It carries out the reaction prostaglandin E2(out) = prostaglandin E2(in). Its activity is regulated as follows. Tyrosine phosphorylation of the transporter leads to activation of the transport activity. Inhibited by cGMP, most likely through a cGMP-binding protein that interacts with OCT2. Electrogenic voltage-dependent transporter that mediates the transport of a variety of organic cations such as endogenous bioactive amines, cationic drugs and xenobiotics. Functions as a Na(+)-independent, bidirectional uniporter. Cation cellular uptake or release is driven by the electrochemical potential, i.e. membrane potential and concentration gradient. However, may also engage electroneutral cation exchange when saturating concentrations of cation substrates are reached. Predominantly expressed at the basolateral membrane of hepatocytes and proximal tubules and involved in the uptake and disposition of cationic compounds by hepatic and renal clearance from the blood flow. Implicated in monoamine neurotransmitters uptake such as histamine, dopamine, adrenaline/epinephrine, noradrenaline/norepinephrine, serotonin and tyramine, thereby supporting a physiological role in the central nervous system by regulating interstitial concentrations of neurotransmitters. Also capable of transporting dopaminergic neuromodulators cyclo(his-pro), salsolinol and N-methyl-salsolinol, thereby involved in the maintenance of dopaminergic cell integrity in the central nervous system. Mediates the bidirectional transport of acetylcholine (ACh) at the apical membrane of ciliated cell in airway epithelium, thereby playing a role in luminal release of ACh from bronchial epithelium. Also transports guanidine and endogenous monoamines such as vitamin B1/thiamine, creatinine and N-1-methylnicotinamide (NMN). Mediates the uptake and efflux of quaternary ammonium compound choline. Mediates the bidirectional transport of polyamine agmatine and the uptake of polyamines putrescine and spermidine. Able to transport non-amine endogenous compounds such as prostaglandin E2 (PGE2) and prostaglandin F2-alpha (PGF2-alpha). Also involved in the uptake of xenobiotic 4-(4-(dimethylamino)styryl)-N-methylpyridinium (ASP). May contribute to regulate the transport of organic compounds in testis across the blood-testis-barrier. The sequence is that of Solute carrier family 22 member 2 (SLC22A2) from Pongo abelii (Sumatran orangutan).